Consider the following 118-residue polypeptide: Fluoride-specific ion channel FluC 1 (118 aa).

The next 4 helical transmembrane spans lie at 5 to 25, 39 to 59, 61 to 81, and 98 to 118; these read FLLV…ISIF, FFIN…ALGP, WQLF…TFKV, and YVGL…MLGV. Positions 71 and 74 each coordinate Na(+).

This sequence belongs to the fluoride channel Fluc/FEX (TC 1.A.43) family.

The protein resides in the cell membrane. It catalyses the reaction fluoride(in) = fluoride(out). Its activity is regulated as follows. Na(+) is not transported, but it plays an essential structural role and its presence is essential for fluoride channel function. Functionally, fluoride-specific ion channel. Important for reducing fluoride concentration in the cell, thus reducing its toxicity. The chain is Fluoride-specific ion channel FluC 1 from Listeria innocua serovar 6a (strain ATCC BAA-680 / CLIP 11262).